The chain runs to 88 residues: UPF0250 protein swp_3927 (88 aa).

Belongs to the UPF0250 family.

The protein is UPF0250 protein swp_3927 of Shewanella piezotolerans (strain WP3 / JCM 13877).